We begin with the raw amino-acid sequence, 209 residues long: Octanoyltransferase (209 aa).

In terms of domain architecture, BPL/LPL catalytic spans Asp-30–Lys-209. Residues Arg-69 to His-76, Ala-143 to Gly-145, and Gly-156 to Ala-158 each bind substrate. Catalysis depends on Cys-174, which acts as the Acyl-thioester intermediate.

The protein belongs to the LipB family.

Its subcellular location is the cytoplasm. The catalysed reaction is octanoyl-[ACP] + L-lysyl-[protein] = N(6)-octanoyl-L-lysyl-[protein] + holo-[ACP] + H(+). The protein operates within protein modification; protein lipoylation via endogenous pathway; protein N(6)-(lipoyl)lysine from octanoyl-[acyl-carrier-protein]: step 1/2. Functionally, catalyzes the transfer of endogenously produced octanoic acid from octanoyl-acyl-carrier-protein onto the lipoyl domains of lipoate-dependent enzymes. Lipoyl-ACP can also act as a substrate although octanoyl-ACP is likely to be the physiological substrate. The protein is Octanoyltransferase of Rickettsia conorii (strain ATCC VR-613 / Malish 7).